The chain runs to 361 residues: Outer membrane protein P2 (361 aa).

The signal sequence occupies residues 1-20 (MKKTLAALIVGAFAASAANA).

The protein belongs to the Gram-negative porin family. As to quaternary structure, homotrimer.

It localises to the cell outer membrane. Its function is as follows. Forms pores that allow passive diffusion of small molecules across the outer membrane. In Haemophilus influenzae, this protein is Outer membrane protein P2 (ompP2).